Consider the following 460-residue polypeptide: Argininosuccinate lyase (460 aa).

The protein belongs to the lyase 1 family. Argininosuccinate lyase subfamily.

It is found in the cytoplasm. The enzyme catalyses 2-(N(omega)-L-arginino)succinate = fumarate + L-arginine. It functions in the pathway amino-acid biosynthesis; L-arginine biosynthesis; L-arginine from L-ornithine and carbamoyl phosphate: step 3/3. The chain is Argininosuccinate lyase from Oleidesulfovibrio alaskensis (strain ATCC BAA-1058 / DSM 17464 / G20) (Desulfovibrio alaskensis).